A 267-amino-acid chain; its full sequence is Orotidine 5'-phosphate decarboxylase (267 aa).

Residues D37, 59-61 (KTH), 91-100 (DRKFADIGNT), Y217, and R235 contribute to the substrate site. Residue K93 is the Proton donor of the active site.

This sequence belongs to the OMP decarboxylase family.

It catalyses the reaction orotidine 5'-phosphate + H(+) = UMP + CO2. Its pathway is pyrimidine metabolism; UMP biosynthesis via de novo pathway; UMP from orotate: step 2/2. The chain is Orotidine 5'-phosphate decarboxylase (URA3) from Kluyveromyces marxianus (Yeast).